Here is a 440-residue protein sequence, read N- to C-terminus: Protein TENP (440 aa).

In terms of tissue distribution, expressed in developing retina and brain, but not in heart, liver or kidney. In brain, located in a narrow strip in the boundary between the ventricular zone (consisting of proliferating cells) and the intermediate zone (consisting of postmitotic, differentiating cells). Expressed in all major regions of the developing brain, including the myelencephalon, the mesencephalon, the telencephalon and the diencephalon. In the developing retina, expression is scattered across the retinal neural epithelium. Expressed in egg white (at protein level). Expressed in the magnum of the oviduct (at protein level).

May play a role in the developmental transition from cell proliferation to cell differentiation during neurogenesis. This is Protein TENP (TENP) from Gallus gallus (Chicken).